A 462-amino-acid polypeptide reads, in one-letter code: UDP-N-acetylmuramoylalanine--D-glutamate ligase (462 aa).

120–126 contributes to the ATP binding site; sequence GTNGKTT.

The protein belongs to the MurCDEF family.

The protein resides in the cytoplasm. It carries out the reaction UDP-N-acetyl-alpha-D-muramoyl-L-alanine + D-glutamate + ATP = UDP-N-acetyl-alpha-D-muramoyl-L-alanyl-D-glutamate + ADP + phosphate + H(+). It participates in cell wall biogenesis; peptidoglycan biosynthesis. Cell wall formation. Catalyzes the addition of glutamate to the nucleotide precursor UDP-N-acetylmuramoyl-L-alanine (UMA). This Bdellovibrio bacteriovorus (strain ATCC 15356 / DSM 50701 / NCIMB 9529 / HD100) protein is UDP-N-acetylmuramoylalanine--D-glutamate ligase.